Reading from the N-terminus, the 150-residue chain is Large ribosomal subunit protein bL9 (150 aa).

The protein belongs to the bacterial ribosomal protein bL9 family.

Functionally, binds to the 23S rRNA. The protein is Large ribosomal subunit protein bL9 of Aromatoleum aromaticum (strain DSM 19018 / LMG 30748 / EbN1) (Azoarcus sp. (strain EbN1)).